Reading from the N-terminus, the 433-residue chain is Serine hydroxymethyltransferase (433 aa).

121–123 is a (6S)-5,6,7,8-tetrahydrofolate binding site; that stretch reads AHV. Residue lysine 227 is modified to N6-(pyridoxal phosphate)lysine. A (6S)-5,6,7,8-tetrahydrofolate-binding site is contributed by glutamate 243.

Belongs to the SHMT family. In terms of assembly, homodimer. Requires pyridoxal 5'-phosphate as cofactor.

The protein resides in the cytoplasm. Its pathway is amino-acid biosynthesis; glycine biosynthesis; glycine from L-serine: step 1/1. Its function is as follows. Catalyzes the reversible interconversion of serine and glycine with a modified folate serving as the one-carbon carrier. Also exhibits a pteridine-independent aldolase activity toward beta-hydroxyamino acids, producing glycine and aldehydes, via a retro-aldol mechanism. The sequence is that of Serine hydroxymethyltransferase from Saccharolobus islandicus (strain M.14.25 / Kamchatka #1) (Sulfolobus islandicus).